Consider the following 161-residue polypeptide: Phosphopantetheine adenylyltransferase (161 aa).

T10 provides a ligand contact to substrate. Residues 10–11 (TF) and H18 each bind ATP. 3 residues coordinate substrate: K42, L74, and R88. ATP contacts are provided by residues 89 to 91 (GIR), E99, and 124 to 130 (WRYLSST).

It belongs to the bacterial CoaD family. Homohexamer. Requires Mg(2+) as cofactor.

It is found in the cytoplasm. The catalysed reaction is (R)-4'-phosphopantetheine + ATP + H(+) = 3'-dephospho-CoA + diphosphate. The protein operates within cofactor biosynthesis; coenzyme A biosynthesis; CoA from (R)-pantothenate: step 4/5. Reversibly transfers an adenylyl group from ATP to 4'-phosphopantetheine, yielding dephospho-CoA (dPCoA) and pyrophosphate. The sequence is that of Phosphopantetheine adenylyltransferase from Haemophilus ducreyi (strain 35000HP / ATCC 700724).